A 233-amino-acid chain; its full sequence is AA9 family lytic polysaccharide monooxygenase A (233 aa).

An N-terminal signal peptide occupies residues 1–17 (MKLTTSVALLAAAGAQA). Residues His-18 and His-90 each coordinate Cu(2+). 2 disulfides stabilise this stretch: Cys-59/Cys-180 and Cys-150/Cys-233. The N-linked (GlcNAc...) asparagine glycan is linked to Asn-132. Residues His-166 and Gln-175 each contribute to the O2 site. Residue Tyr-177 participates in Cu(2+) binding.

The protein belongs to the polysaccharide monooxygenase AA9 family. It depends on Cu(2+) as a cofactor.

It is found in the secreted. The catalysed reaction is [(1-&gt;4)-beta-D-glucosyl]n+m + reduced acceptor + O2 = 4-dehydro-beta-D-glucosyl-[(1-&gt;4)-beta-D-glucosyl]n-1 + [(1-&gt;4)-beta-D-glucosyl]m + acceptor + H2O.. Its function is as follows. Lytic polysaccharide monooxygenase (LPMO) that depolymerizes crystalline and amorphous polysaccharides via the oxidation of scissile alpha- or beta-(1-4)-glycosidic bonds, yielding C1 and C4 oxidation products. Catalysis by LPMOs requires the reduction of the active-site copper from Cu(II) to Cu(I) by a reducing agent and H(2)O(2) or O(2) as a cosubstrate. Shows endoglucanase activity on tamarind xyloglucan, as well as on beechwood xylan when combined with phosphoric acid swollen cellulose (PASC). Shows no activity on wheat arabinoxylan, konjac glucomannan, acetylated spruce galactoglucomannan, or cellopentaose. In Thermothielavioides terrestris (strain ATCC 38088 / NRRL 8126) (Thielavia terrestris), this protein is AA9 family lytic polysaccharide monooxygenase A.